The sequence spans 539 residues: CTP synthase (539 aa).

Residues 1–268 (MSFKSIFLTG…SDFLLNKLGF (268 aa)) form an amidoligase domain region. Ser14 contributes to the CTP binding site. Ser14 contacts UTP. Residue 15 to 20 (SLGKGL) participates in ATP binding. Tyr55 contacts L-glutamine. Asp72 contributes to the ATP binding site. Residues Asp72 and Glu142 each contribute to the Mg(2+) site. Residues 149 to 151 (DIE), 188 to 193 (KTKPTQ), and Lys224 each bind CTP. UTP is bound by residues 188–193 (KTKPTQ) and Lys224. In terms of domain architecture, Glutamine amidotransferase type-1 spans 294–532 (RIGLVGKYLE…IRAAKAYSLE (239 aa)). An L-glutamine-binding site is contributed by Gly353. Cys380 serves as the catalytic Nucleophile; for glutamine hydrolysis. Residues 381 to 384 (LGMQ), Glu404, and Arg460 each bind L-glutamine. Active-site residues include His505 and Glu507.

It belongs to the CTP synthase family. In terms of assembly, homotetramer.

It carries out the reaction UTP + L-glutamine + ATP + H2O = CTP + L-glutamate + ADP + phosphate + 2 H(+). It catalyses the reaction L-glutamine + H2O = L-glutamate + NH4(+). The catalysed reaction is UTP + NH4(+) + ATP = CTP + ADP + phosphate + 2 H(+). It functions in the pathway pyrimidine metabolism; CTP biosynthesis via de novo pathway; CTP from UDP: step 2/2. With respect to regulation, allosterically activated by GTP, when glutamine is the substrate; GTP has no effect on the reaction when ammonia is the substrate. The allosteric effector GTP functions by stabilizing the protein conformation that binds the tetrahedral intermediate(s) formed during glutamine hydrolysis. Inhibited by the product CTP, via allosteric rather than competitive inhibition. In terms of biological role, catalyzes the ATP-dependent amination of UTP to CTP with either L-glutamine or ammonia as the source of nitrogen. Regulates intracellular CTP levels through interactions with the four ribonucleotide triphosphates. The sequence is that of CTP synthase from Chlamydia trachomatis serovar L2 (strain ATCC VR-902B / DSM 19102 / 434/Bu).